The primary structure comprises 231 residues: Putative cobalt transport protein CbiM 1 (231 aa).

A run of 6 helical transmembrane segments spans residues 6–26 (GFLP…FLIY), 41–61 (VLPL…VDIP), 79–99 (FFGP…QALL), 107–127 (TLGA…WLVF), 136–156 (VPLG…TYLI), and 172–192 (LTAF…ISII).

This sequence belongs to the CbiM family. In terms of assembly, forms an energy-coupling factor (ECF) transporter complex composed of an ATP-binding protein (A component, CbiO), a transmembrane protein (T component, CbiQ) and 2 possible substrate-capture proteins (S components, CbiM and CbiN) of unknown stoichimetry.

Its subcellular location is the cell membrane. The protein operates within cofactor biosynthesis; adenosylcobalamin biosynthesis. Its function is as follows. Part of the energy-coupling factor (ECF) transporter complex CbiMNOQ involved in cobalt import. The sequence is that of Putative cobalt transport protein CbiM 1 from Methanocorpusculum labreanum (strain ATCC 43576 / DSM 4855 / Z).